Here is a 484-residue protein sequence, read N- to C-terminus: Protein nucleotidyltransferase YdiU (484 aa).

Positions 92, 94, 95, 115, 127, 128, 178, and 185 each coordinate ATP. D258 (proton acceptor) is an active-site residue. Mg(2+) is bound by residues N259 and D268. D268 contacts ATP.

The protein belongs to the SELO family. Mg(2+) serves as cofactor. The cofactor is Mn(2+).

It catalyses the reaction L-seryl-[protein] + ATP = 3-O-(5'-adenylyl)-L-seryl-[protein] + diphosphate. It carries out the reaction L-threonyl-[protein] + ATP = 3-O-(5'-adenylyl)-L-threonyl-[protein] + diphosphate. The enzyme catalyses L-tyrosyl-[protein] + ATP = O-(5'-adenylyl)-L-tyrosyl-[protein] + diphosphate. The catalysed reaction is L-histidyl-[protein] + UTP = N(tele)-(5'-uridylyl)-L-histidyl-[protein] + diphosphate. It catalyses the reaction L-seryl-[protein] + UTP = O-(5'-uridylyl)-L-seryl-[protein] + diphosphate. It carries out the reaction L-tyrosyl-[protein] + UTP = O-(5'-uridylyl)-L-tyrosyl-[protein] + diphosphate. Its function is as follows. Nucleotidyltransferase involved in the post-translational modification of proteins. It can catalyze the addition of adenosine monophosphate (AMP) or uridine monophosphate (UMP) to a protein, resulting in modifications known as AMPylation and UMPylation. This is Protein nucleotidyltransferase YdiU from Mycolicibacterium smegmatis (strain ATCC 700084 / mc(2)155) (Mycobacterium smegmatis).